The sequence spans 220 residues: Chloramphenicol acetyltransferase (220 aa).

The active-site Proton acceptor is the His195.

The protein belongs to the chloramphenicol acetyltransferase family. As to quaternary structure, homotrimer.

It carries out the reaction chloramphenicol + acetyl-CoA = chloramphenicol 3-acetate + CoA. This enzyme is an effector of chloramphenicol resistance in bacteria. This Streptomyces acrimycini protein is Chloramphenicol acetyltransferase (cat).